Reading from the N-terminus, the 359-residue chain is GATA-binding factor 1-A (359 aa).

Positions 1–21 are disordered; sequence MDYTTLTTQDPDPNYTESGLA. 2 GATA-type zinc fingers span residues 178-202 and 232-256; these read CVNC…CNAC and CSNC…CNAC. Disordered stretches follow at residues 271-311 and 323-359; these read MKKE…SPYP and PMGH…VTPP. Positions 279–291 are enriched in basic residues; the sequence is RNRKVSSRSKKKK.

In terms of tissue distribution, expressed in the developing ventral blood island, and in both tadpole and adult erythrocytes.

The protein localises to the nucleus. In terms of biological role, transcription factor that acts synergistically with tal1/scl and lmo2 to specify embryonic dorsal mesoderm to a hematopoietic fate. The sequence is that of GATA-binding factor 1-A (gata1-a) from Xenopus laevis (African clawed frog).